Consider the following 267-residue polypeptide: 4-hydroxy-tetrahydrodipicolinate reductase (267 aa).

NAD(+)-binding positions include G9–M14 and D35. R36 provides a ligand contact to NADP(+). Residues G99–T101 and A123–Y126 each bind NAD(+). H156 serves as the catalytic Proton donor/acceptor. Position 157 (H157) interacts with (S)-2,3,4,5-tetrahydrodipicolinate. K160 serves as the catalytic Proton donor. (S)-2,3,4,5-tetrahydrodipicolinate is bound at residue G166 to T167.

The protein belongs to the DapB family.

It localises to the cytoplasm. It carries out the reaction (S)-2,3,4,5-tetrahydrodipicolinate + NAD(+) + H2O = (2S,4S)-4-hydroxy-2,3,4,5-tetrahydrodipicolinate + NADH + H(+). The catalysed reaction is (S)-2,3,4,5-tetrahydrodipicolinate + NADP(+) + H2O = (2S,4S)-4-hydroxy-2,3,4,5-tetrahydrodipicolinate + NADPH + H(+). It participates in amino-acid biosynthesis; L-lysine biosynthesis via DAP pathway; (S)-tetrahydrodipicolinate from L-aspartate: step 4/4. Its function is as follows. Catalyzes the conversion of 4-hydroxy-tetrahydrodipicolinate (HTPA) to tetrahydrodipicolinate. In Halorhodospira halophila (strain DSM 244 / SL1) (Ectothiorhodospira halophila (strain DSM 244 / SL1)), this protein is 4-hydroxy-tetrahydrodipicolinate reductase.